A 3434-amino-acid polypeptide reads, in one-letter code: Genome polyprotein (3434 aa).

An interaction with host EXOC1 region spans residues 2–15 (SKKPGGPGKPRVVN). The Cytoplasmic portion of the chain corresponds to 2 to 110 (SKKPGGPGKP…KQKKRGGSET (109 aa)). The hydrophobic; homodimerization of capsid protein C stretch occupies residues 37-72 (LLDGRGPIRFVLALLAFFRFTALAPTKALMRRWKSV). The propeptide at 106 to 125 (GGSETSVLMLIFMLIGFAAA) is ER anchor for the capsid protein C, removed in mature form by serine protease NS3. A helical transmembrane segment spans residues 111–131 (SVLMLIFMLIGFAAALKLSTF). The Extracellular portion of the chain corresponds to 132–251 (QGKIMMTVNA…ATRYLTKTEN (120 aa)). N-linked (GlcNAc...) asparagine; by host glycosylation is present at asparagine 140. Residues 252-272 (WIIRNPGYALVAVVLGWMLGS) form a helical membrane-spanning segment. Topologically, residues 273-277 (NTGQK) are cytoplasmic. The helical transmembrane segment at 278–292 (VIFTVLLLLVAPAYS) threads the bilayer. Residues 293–745 (FNCLGMSSRD…QVFGGAFRTL (453 aa)) are Extracellular-facing. Disulfide bonds link cysteine 295-cysteine 322, cysteine 352-cysteine 408, cysteine 352-cysteine 413, cysteine 366-cysteine 397, cysteine 384-cysteine 408, and cysteine 384-cysteine 413. The tract at residues 390–403 (DRGWGNGCGLFGKG) is fusion peptide. Asparagine 446 carries N-linked (GlcNAc...) asparagine; by host glycosylation. 2 cysteine pairs are disulfide-bonded: cysteine 482-cysteine 580 and cysteine 597-cysteine 628. The chain crosses the membrane as a helical span at residues 746–766 (FGGMSWISPGLLGALLLWMGV). Over 767 to 772 (NARDKS) the chain is Cytoplasmic. Residues 773-793 (IALAFLATGGVLLFLATNVHA) form a helical membrane-spanning segment. Residues 794-1218 (DTGCAIDITR…AFAESNNGGD (425 aa)) are Extracellular-facing. 2 disulfides stabilise this stretch: cysteine 797/cysteine 808 and cysteine 848/cysteine 936. 2 N-linked (GlcNAc...) asparagine; by host glycosylation sites follow: asparagine 923 and asparagine 968. 4 disulfide bridges follow: cysteine 972-cysteine 1016, cysteine 1073-cysteine 1122, cysteine 1084-cysteine 1105, and cysteine 1106-cysteine 1109. Asparagine 1000 is a glycosylation site (N-linked (GlcNAc...) (high mannose) asparagine; by host). The chain crosses the membrane as a helical span at residues 1219 to 1239 (VIHLALIAVFKVQPAFLVASL). Residues 1240 to 1249 (TRSRWTNQEN) lie on the Cytoplasmic side of the membrane. A helical transmembrane segment spans residues 1250-1270 (LVLVLGAAFFQMAASDLELTI). At 1271–1286 (PGLLNSAATAWMVLRA) the chain is on the lumenal side. The chain crosses the membrane as a helical span at residues 1287 to 1307 (MAFPSTSAIAMPMLAMLAPGM). Position 1308 (arginine 1308) is a topological domain, cytoplasmic. Residues 1309 to 1329 (MLHLDTYRIVLLLIGICSLLN) traverse the membrane as a helical segment. Residues 1330–1340 (ERRRSVEKKKG) are Lumenal-facing. The chain crosses the membrane as a helical span at residues 1341–1361 (AVLIGLALTSTGYFSPTIMAA). Over 1362–1373 (GLMICNPNKKRG) the chain is Cytoplasmic. Residues 1374-1394 (WPATEVLTAVGLMFAIVGGLA) form a helical membrane-spanning segment. The Lumenal portion of the chain corresponds to 1395–1397 (ELD). A helical transmembrane segment spans residues 1398-1418 (IDSMSVPFTIAGLMLVSYVIS). At 1419–1475 (GKATDMWLERAADVSWEAGAAITGTSERLDVQLDDDGDFHLLNDPGVPWKIWVLRMT) the chain is on the cytoplasmic side. Residues 1426–1465 (LERAADVSWEAGAAITGTSERLDVQLDDDGDFHLLNDPGV) form an interacts with and activates NS3 protease region. The helical intramembrane region spans 1476-1496 (CLSVAAITPRAILPSAFGYWL). The Cytoplasmic portion of the chain corresponds to 1497–2172 (TLKYTKRGGV…RMALEELPDA (676 aa)). Positions 1504–1681 (GGVFWDTPSP…ERVEEPVPEA (178 aa)) constitute a Peptidase S7 domain. Catalysis depends on charge relay system; for serine protease NS3 activity residues histidine 1554, aspartate 1578, and serine 1638. The 157-residue stretch at 1684–1840 (PEMLKKRQLT…DTNSPVHDVS (157 aa)) folds into the Helicase ATP-binding domain. The important for RNA-binding stretch occupies residues 1688–1691 (KKRQ). 1697-1704 (LHPGAGKT) contributes to the ATP binding site. Residues 1788-1791 (DEAH) carry the DEAH box motif. The 166-residue stretch at 1851–2016 (GFEWITDYAG…GLVAQLYGPE (166 aa)) folds into the Helicase C-terminal domain. An N6-acetyllysine; by host modification is found at lysine 1892. The tract at residues 1958–1979 (AAQRRGRVGRNPSQIGDEYHYG) is disordered. The interval 2167–2171 (EELPD) is regulates the ATPase activity of NS3 helicase. Residues 2173-2193 (LETITLIAALGVMTAGFFLLM) form a helical membrane-spanning segment. Topologically, residues 2194–2197 (MQRK) are lumenal. Positions 2198-2218 (GIGKLGLGALVLVVATFFLWM) form an intramembrane region, helical. Topologically, residues 2219–2220 (SD) are lumenal. The helical transmembrane segment at 2221–2241 (VSGTKIAGVLLLALLMMVVLI) threads the bilayer. At 2242–2256 (PEPEKQRSQTDNQLA) the chain is on the cytoplasmic side. Residues 2257–2271 (VFLICVLLVVGLVAA) traverse the membrane as a helical segment. Topologically, residues 2272–2309 (NEYGMLERTKTDIRNLFGKSLIEENEVHIPPFDFFTLD) are lumenal. Positions 2310–2330 (LKPATAWALYGGSTVVLTPLI) form an intramembrane region, helical. The Lumenal segment spans residues 2331-2366 (KHLVTSQYVTTSLASINAQAGSLFTLPKGIPFTDFD). The helical transmembrane segment at 2367-2394 (LSVALVFLGCWGQVTLTTLIMATILVTL) threads the bilayer. The Cytoplasmic segment spans residues 2395–2446 (HYGYLLPGWQAEALRAAQKRTAAGIMKNAVVDGIVATDVPELERTTPQMQKR). The helical transmembrane segment at 2447 to 2467 (LGQILLVLASVAAVCVNPRIT) threads the bilayer. Residues 2468–2498 (TIREAGILCTAAALTLWDNNASAAWNSTTAT) lie on the Lumenal side of the membrane. Residues 2499–2519 (GLCHVMRGSWIAGASIAWTLI) form a helical membrane-spanning segment. The Cytoplasmic segment spans residues 2520 to 3434 (KNAEKPAFKR…ETHVSEDRVL (915 aa)). In terms of domain architecture, mRNA cap 0-1 NS5-type MT spans 2530–2795 (GRAGGRTLGE…DVNLGSGTRA (266 aa)). S-adenosyl-L-methionine is bound at residue serine 2585. Serine 2585 carries the post-translational modification Phosphoserine. Lysine 2590 functions as the For 2'-O-MTase activity in the catalytic mechanism. S-adenosyl-L-methionine is bound by residues glycine 2615, tryptophan 2616, threonine 2633, lysine 2634, aspartate 2660, and valine 2661. Aspartate 2675 (for 2'-O-MTase activity) is an active-site residue. Isoleucine 2676 provides a ligand contact to S-adenosyl-L-methionine. Active-site for 2'-O-MTase activity residues include lysine 2711 and glutamate 2747. Tyrosine 2749 is a binding site for S-adenosyl-L-methionine. Residues glutamate 2969, histidine 2973, cysteine 2978, and cysteine 2981 each contribute to the Zn(2+) site. The region spanning 3059 to 3211 (GKIYADDTAG…KPLDDRFSTA (153 aa)) is the RdRp catalytic domain. Zn(2+) contacts are provided by histidine 3246, cysteine 3262, and cysteine 3381.

The protein in the N-terminal section; belongs to the class I-like SAM-binding methyltransferase superfamily. mRNA cap 0-1 NS5-type methyltransferase family. As to quaternary structure, homodimer. Interacts (via N-terminus) with host EXOC1 (via C-terminus); this interaction results in EXOC1 degradation through the proteasome degradation pathway. In terms of assembly, forms heterodimers with envelope protein E in the endoplasmic reticulum and Golgi. Homodimer; in the endoplasmic reticulum and Golgi. Interacts with protein prM. Interacts with non-structural protein 1. As to quaternary structure, homodimer; Homohexamer when secreted. Interacts with envelope protein E. NS1 interacts with NS4B. Interacts with host complement protein CFH; this interaction leads to the degradation of C3. In terms of assembly, interacts (via N-terminus) with serine protease NS3. Forms a heterodimer with serine protease NS3. May form homooligomers. As to quaternary structure, forms a heterodimer with NS2B. Interacts with non-structural protein 2A (via N-terminus). Interacts with NS4B. Interacts with unphosphorylated RNA-directed RNA polymerase NS5; this interaction stimulates RNA-directed RNA polymerase NS5 guanylyltransferase activity. In terms of assembly, interacts with serine protease NS3. Homodimer. Interacts with host STAT2; this interaction inhibits the phosphorylation of the latter, and, when all viral proteins are present (polyprotein), targets STAT2 for degradation. Interacts with serine protease NS3. Post-translationally, specific enzymatic cleavages in vivo yield mature proteins. Cleavages in the lumen of endoplasmic reticulum are performed by host signal peptidase, whereas cleavages in the cytoplasmic side are performed by serine protease NS3. Signal cleavage at the 2K-4B site requires a prior NS3 protease-mediated cleavage at the 4A-2K site. Cleaved in post-Golgi vesicles by a host furin, releasing the mature small envelope protein M, and peptide pr. This cleavage is incomplete as up to 30% of viral particles still carry uncleaved prM. In terms of processing, N-glycosylated. Post-translationally, N-glycosylated. The excreted form is glycosylated and this is required for efficient secretion of the protein from infected cells. Acetylated by host KAT5. Acetylation modulates NS3 RNA-binding and unwinding activities and plays an important positive role for viral replication. In terms of processing, phosphorylated on serines residues. This phosphorylation may trigger NS5 nuclear localization.

It localises to the virion. The protein resides in the host nucleus. The protein localises to the host cytoplasm. Its subcellular location is the host perinuclear region. It is found in the secreted. It localises to the virion membrane. The protein resides in the host endoplasmic reticulum membrane. The enzyme catalyses Selective hydrolysis of -Xaa-Xaa-|-Yaa- bonds in which each of the Xaa can be either Arg or Lys and Yaa can be either Ser or Ala.. The catalysed reaction is RNA(n) + a ribonucleoside 5'-triphosphate = RNA(n+1) + diphosphate. It catalyses the reaction a ribonucleoside 5'-triphosphate + H2O = a ribonucleoside 5'-diphosphate + phosphate + H(+). It carries out the reaction ATP + H2O = ADP + phosphate + H(+). The enzyme catalyses a 5'-end (5'-triphosphoguanosine)-ribonucleoside in mRNA + S-adenosyl-L-methionine = a 5'-end (N(7)-methyl 5'-triphosphoguanosine)-ribonucleoside in mRNA + S-adenosyl-L-homocysteine. The catalysed reaction is a 5'-end (N(7)-methyl 5'-triphosphoguanosine)-ribonucleoside in mRNA + S-adenosyl-L-methionine = a 5'-end (N(7)-methyl 5'-triphosphoguanosine)-(2'-O-methyl-ribonucleoside) in mRNA + S-adenosyl-L-homocysteine + H(+). Functionally, plays a role in virus budding by binding to the cell membrane and gathering the viral RNA into a nucleocapsid that forms the core of a mature virus particle. During virus entry, may induce genome penetration into the host cytoplasm after hemifusion induced by the surface proteins. Can migrate to the cell nucleus where it modulates host functions. Overcomes the anti-viral effects of host EXOC1 by sequestering and degrading the latter through the proteasome degradation pathway. In terms of biological role, inhibits RNA silencing by interfering with host Dicer. Its function is as follows. Prevents premature fusion activity of envelope proteins in trans-Golgi by binding to envelope protein E at pH6.0. After virion release in extracellular space, gets dissociated from E dimers. Acts as a chaperone for envelope protein E during intracellular virion assembly by masking and inactivating envelope protein E fusion peptide. prM is the only viral peptide matured by host furin in the trans-Golgi network probably to avoid catastrophic activation of the viral fusion activity in acidic Golgi compartment prior to virion release. prM-E cleavage is inefficient, and many virions are only partially matured. These uncleaved prM would play a role in immune evasion. Functionally, may play a role in virus budding. Exerts cytotoxic effects by activating a mitochondrial apoptotic pathway through M ectodomain. May display a viroporin activity. In terms of biological role, binds to host cell surface receptor and mediates fusion between viral and cellular membranes. Envelope protein is synthesized in the endoplasmic reticulum in the form of heterodimer with protein prM. They play a role in virion budding in the ER, and the newly formed immature particle is covered with 60 spikes composed of heterodimer between precursor prM and envelope protein E. The virion is transported to the Golgi apparatus where the low pH causes dissociation of PrM-E heterodimers and formation of E homodimers. prM-E cleavage is inefficient, and many virions are only partially matured. These uncleaved prM would play a role in immune evasion. Its function is as follows. Involved in immune evasion, pathogenesis and viral replication. Once cleaved off the polyprotein, is targeted to three destinations: the viral replication cycle, the plasma membrane and the extracellular compartment. Essential for viral replication. Required for formation of the replication complex and recruitment of other non-structural proteins to the ER-derived membrane structures. Excreted as a hexameric lipoparticle that plays a role against host immune response. Antagonizing the complement function. Binds to the host macrophages and dendritic cells. Inhibits signal transduction originating from Toll-like receptor 3 (TLR3). Component of the viral RNA replication complex that functions in virion assembly and antagonizes the host alpha/beta interferon antiviral response. Functionally, required cofactor for the serine protease function of NS3. May have membrane-destabilizing activity and form viroporins. In terms of biological role, displays three enzymatic activities: serine protease, NTPase and RNA helicase. NS3 serine protease, in association with NS2B, performs its autocleavage and cleaves the polyprotein at dibasic sites in the cytoplasm: C-prM, NS2A-NS2B, NS2B-NS3, NS3-NS4A, NS4A-2K and NS4B-NS5. NS3 RNA helicase binds RNA and unwinds dsRNA in the 3' to 5' direction. Its function is as follows. Regulates the ATPase activity of the NS3 helicase activity. NS4A allows NS3 helicase to conserve energy during unwinding. Functions as a signal peptide for NS4B and is required for the interferon antagonism activity of the latter. Functionally, induces the formation of ER-derived membrane vesicles where the viral replication takes place. Inhibits interferon (IFN)-induced host STAT1 phosphorylation and nuclear translocation, thereby preventing the establishment of cellular antiviral state by blocking the IFN-alpha/beta pathway. Inhibits STAT2 translocation in the nucleus after IFN-alpha treatment. In terms of biological role, replicates the viral (+) and (-) RNA genome, and performs the capping of genomes in the cytoplasm. NS5 methylates viral RNA cap at guanine N-7 and ribose 2'-O positions. Besides its role in RNA genome replication, also prevents the establishment of cellular antiviral state by blocking the interferon-alpha/beta (IFN-alpha/beta) signaling pathway. Inhibits host TYK2 and STAT2 phosphorylation, thereby preventing activation of JAK-STAT signaling pathway. This is Genome polyprotein from Culex annulirostris (Common banded mosquito).